A 1325-amino-acid chain; its full sequence is Protein suppressor of sable (1325 aa).

Disordered regions lie at residues 1-36 and 74-326; these read MSVA…SKIQ and VCLQ…GGSN. Residues 9–30 show a composition bias toward acidic residues; the sequence is PLIDLEEDLEDGEIDDDEEDEQ. Over residues 119-131 the composition is skewed to polar residues; it reads RSSNQDTSDQSLE. Residues 138–327 are highly charged; the sequence is ATANPLLQST…GQEKMGGSNR (190 aa). A compositionally biased stretch (basic residues) spans 149-158; the sequence is SSRRRKRKKE. Positions 149-179 form a coiled coil; the sequence is SSRRRKRKKEREREQKKDKEQQNRSRRDEND. Residues 159–178 are compositionally biased toward basic and acidic residues; sequence REREQKKDKEQQNRSRRDEN. Positions 236 to 246 are enriched in gly residues; the sequence is AGLGAGGGGGY. Positions 276–296 form a coiled coil; the sequence is NEKEHQRGVNNRKRRDRDRLE. 2 C3H1-type zinc fingers span residues 330 to 357 and 358 to 381; these read PRKL…HKEF and PCKY…HGEP. A coiled-coil region spans residues 444–478; the sequence is KRQDHQMQQQQQQLQHQQLQQQQEQQQTQQQAAAD. The span at 499-509 shows a compositional bias: basic and acidic residues; the sequence is KRKSRWTEKMG. Disordered regions lie at residues 499–535, 588–622, 639–695, 710–745, 780–835, 979–1058, 1143–1170, and 1295–1325; these read KRKS…LPPH, KAED…KSNG, FSGN…PSVF, SARQ…IGGG, AHSG…ALPP, DLET…GGSK, EPNG…GGGV, and RGGH…NRNI. Ser524 bears the Phosphoserine mark. Residues 594–606 are compositionally biased toward polar residues; sequence PQTQAELESSTPP. Thr604 is modified (phosphothreonine). The segment covering 644–668 has biased composition (acidic residues); sequence PLDDDRDDDEQLIIDDGNDSTAEED. The residue at position 663 (Ser663) is a Phosphoserine. Thr664 is modified (phosphothreonine). Positions 710–726 are enriched in polar residues; it reads SARQLLPASATSPNQEN. Residues 790–800 are compositionally biased toward low complexity; it reads SNENSNSNSHS. Pro residues predominate over residues 1003–1015; sequence SVPPPSMRVPPPN. Residues 1021–1033 show a composition bias toward basic and acidic residues; it reads PTVRTDPRRDPRR. Over residues 1042-1056 the composition is skewed to low complexity; sequence GASTANTTAPNASGG. Composition is skewed to gly residues over residues 1149 to 1170 and 1295 to 1309; these read AALG…GGGV and RGGH…GNGN.

The protein belongs to the suppressor of sable family. Interacts with Wdr82.

It localises to the nucleus. Its subcellular location is the chromosome. Its function is as follows. RNA-binding protein that suppresses transcription of some RNAs. Together with Wdr82, part of a transcription termination checkpoint that promotes transcription termination of RNAs and their subsequent degradation by the nuclear exosome. Promotes transcription termination of aberrant RNAs, transcripts from genes containing a transposon inserted at their very 5' end or RNAs from heat-shock-inducible repetitive element. Binds RNA preferentially at a sequence that resembles a cryptic 5'-splice site. This is Protein suppressor of sable from Drosophila melanogaster (Fruit fly).